Consider the following 773-residue polypeptide: Polyribonucleotide nucleotidyltransferase (773 aa).

Residues aspartate 532 and aspartate 538 each contribute to the Mg(2+) site. Positions 598–657 (PRVITIKVPVDKIGEVIGPKGKVINAITEETGAQISIEDDGTVFVGATDGLSAQAAINKI) constitute a KH domain. Residues 669–738 (GERFLGTVVK…KRGKISLVLV (70 aa)) enclose the S1 motif domain. Residues 749-773 (APADAGAAQEFGSGTAPADAATASS) form a disordered region.

This sequence belongs to the polyribonucleotide nucleotidyltransferase family. Mg(2+) is required as a cofactor.

It is found in the cytoplasm. It catalyses the reaction RNA(n+1) + phosphate = RNA(n) + a ribonucleoside 5'-diphosphate. Involved in mRNA degradation. Catalyzes the phosphorolysis of single-stranded polyribonucleotides processively in the 3'- to 5'-direction. This chain is Polyribonucleotide nucleotidyltransferase, found in Mycobacterium leprae (strain Br4923).